Reading from the N-terminus, the 383-residue chain is Ribosomal RNA large subunit methyltransferase G (383 aa).

The protein belongs to the methyltransferase superfamily. RlmG family.

The protein resides in the cytoplasm. The enzyme catalyses guanosine(1835) in 23S rRNA + S-adenosyl-L-methionine = N(2)-methylguanosine(1835) in 23S rRNA + S-adenosyl-L-homocysteine + H(+). Specifically methylates the guanine in position 1835 (m2G1835) of 23S rRNA. This is Ribosomal RNA large subunit methyltransferase G from Vibrio atlanticus (strain LGP32) (Vibrio splendidus (strain Mel32)).